The following is a 361-amino-acid chain: Phosphoserine aminotransferase (361 aa).

Arg43 serves as a coordination point for L-glutamate. Pyridoxal 5'-phosphate is bound by residues 77–78 (AS), Trp103, Thr153, Asp173, and Gln196. Lys197 is modified (N6-(pyridoxal phosphate)lysine). Residue 238–239 (NT) coordinates pyridoxal 5'-phosphate.

This sequence belongs to the class-V pyridoxal-phosphate-dependent aminotransferase family. SerC subfamily. As to quaternary structure, homodimer. It depends on pyridoxal 5'-phosphate as a cofactor.

It localises to the cytoplasm. The catalysed reaction is O-phospho-L-serine + 2-oxoglutarate = 3-phosphooxypyruvate + L-glutamate. It carries out the reaction 4-(phosphooxy)-L-threonine + 2-oxoglutarate = (R)-3-hydroxy-2-oxo-4-phosphooxybutanoate + L-glutamate. It participates in amino-acid biosynthesis; L-serine biosynthesis; L-serine from 3-phospho-D-glycerate: step 2/3. It functions in the pathway cofactor biosynthesis; pyridoxine 5'-phosphate biosynthesis; pyridoxine 5'-phosphate from D-erythrose 4-phosphate: step 3/5. Functionally, catalyzes the reversible conversion of 3-phosphohydroxypyruvate to phosphoserine and of 3-hydroxy-2-oxo-4-phosphonooxybutanoate to phosphohydroxythreonine. The protein is Phosphoserine aminotransferase of Pseudomonas syringae pv. tomato (strain ATCC BAA-871 / DC3000).